Here is a 283-residue protein sequence, read N- to C-terminus: MTDTLSDYVDCTPLLDDREALDRFYDEHGYVYLRGALDRELVRTAAEQMLEGLIALGHADPATTLDTLTIDSFEAVDEVAMHDYVKYDDLWNHPSTLKVWEKVLGEPVFVFKSTTIRYYPSAAGSAEPSFLTPLHQDGFYIGPNKDFRTAWIPLLPTSHGIGGVAVADGSHKKGPREHVVTEQFRRFGHAVRGIPAEEFGTDEQLLFSPMEPGDVLIFHAFMCHKSIPNVSANPAGMRMSMDTRIQPASSHRGFNALTPWPESAKDASKGILSKITGTPTTAE.

Residue arginine 117 coordinates substrate. Fe cation contacts are provided by histidine 135 and aspartate 137. 2-oxoglutarate contacts are provided by residues 135–137 (HQD) and tryptophan 151. Position 186 (arginine 186) interacts with substrate. Histidine 224 provides a ligand contact to Fe cation. 2 residues coordinate 2-oxoglutarate: serine 226 and arginine 238. Residues 260 to 283 (WPESAKDASKGILSKITGTPTTAE) form a disordered region.

This sequence belongs to the PhyH family. It depends on Fe cation as a cofactor. L-ascorbate serves as cofactor.

The catalysed reaction is 1-deoxypentalenate + 2-oxoglutarate + O2 = 1-deoxy-11beta-hydroxypentalenate + succinate + CO2. It participates in antibiotic biosynthesis; pentalenolactone biosynthesis. Functionally, catalyzes the conversion of 1-deoxypentalenic acid to 11-beta-hydroxy-1-deoxypentalenic acid in the biosynthesis of pentalenolactone antibiotic. The chain is 1-deoxypentalenic acid 11-beta-hydroxylase (penH) from Streptomyces exfoliatus (Streptomyces hydrogenans).